The chain runs to 316 residues: ATP synthase gamma chain (316 aa).

Belongs to the ATPase gamma chain family. As to quaternary structure, F-type ATPases have 2 components, CF(1) - the catalytic core - and CF(0) - the membrane proton channel. CF(1) has five subunits: alpha(3), beta(3), gamma(1), delta(1), epsilon(1). CF(0) has three main subunits: a, b and c.

It localises to the cellular thylakoid membrane. Functionally, produces ATP from ADP in the presence of a proton gradient across the membrane. The gamma chain is believed to be important in regulating ATPase activity and the flow of protons through the CF(0) complex. The protein is ATP synthase gamma chain of Prochlorococcus marinus (strain MIT 9301).